A 1095-amino-acid chain; its full sequence is DNA polymerase delta catalytic subunit (1095 aa).

Residues 1-11 (MNRSGISKKRP) are compositionally biased toward basic residues. The segment at 1 to 37 (MNRSGISKKRPPPSNTPPPAGKHRATGDSTPSPAIGT) is disordered. Positions 1007, 1010, 1020, and 1023 each coordinate Zn(2+). The CysA-type zinc-finger motif lies at 1007 to 1023 (CVGCKVPISNGTLCASC). [4Fe-4S] cluster is bound by residues cysteine 1052, cysteine 1055, cysteine 1065, and cysteine 1070. Residues 1052 to 1070 (CQECQGSLHQDVLCTSRDC) carry the CysB motif motif.

Belongs to the DNA polymerase type-B family. Heterodimer with subunits of 125 kDa and 50 kDa. The 125 kDa subunit contains the polymerase active site and most likely the active site for the 3'-5' exonuclease activity. Requires [4Fe-4S] cluster as cofactor.

Its subcellular location is the nucleus. The enzyme catalyses DNA(n) + a 2'-deoxyribonucleoside 5'-triphosphate = DNA(n+1) + diphosphate. Functionally, this polymerase possesses two enzymatic activities: DNA synthesis (polymerase) and an exonucleolytic activity that degrades single-stranded DNA in the 3'- to 5'-direction. The polypeptide is DNA polymerase delta catalytic subunit (POLD1) (Arabidopsis thaliana (Mouse-ear cress)).